Here is a 98-residue protein sequence, read N- to C-terminus: Large ribosomal subunit protein bL21 (98 aa).

This sequence belongs to the bacterial ribosomal protein bL21 family. In terms of assembly, part of the 50S ribosomal subunit. Contacts protein L20.

This protein binds to 23S rRNA in the presence of protein L20. The sequence is that of Large ribosomal subunit protein bL21 from Chloroherpeton thalassium (strain ATCC 35110 / GB-78).